We begin with the raw amino-acid sequence, 145 residues long: Large ribosomal subunit protein uL13 (145 aa).

The protein belongs to the universal ribosomal protein uL13 family. Part of the 50S ribosomal subunit.

Its function is as follows. This protein is one of the early assembly proteins of the 50S ribosomal subunit, although it is not seen to bind rRNA by itself. It is important during the early stages of 50S assembly. This chain is Large ribosomal subunit protein uL13, found in Halobacterium salinarum (strain ATCC 700922 / JCM 11081 / NRC-1) (Halobacterium halobium).